The sequence spans 189 residues: Phomopsin biosynthesis cluster protein C' (189 aa).

The protein belongs to the oryJ family.

In terms of biological role, part of the gene cluster that mediates the biosynthesis of the phomopsins, a group of hexapeptide mycotoxins which infects lupins and causes lupinosis disease in livestock. The role of phomC' within the phomopsins biosynthesis pathway has still to be determined. The pathway starts with the processing of the precursor phomA by several endopeptidases including kexin proteases as well as the cluster-specific S41 family peptidase phomP1 and the oligopeptidase phomG to produce 10 identical copies of the hexapeptide Tyr-Val-Ile-Pro-Ile-Asp. After being excised from the precursor peptide, the core peptides are cyclized and modified post-translationally by enzymes encoded within the gene cluster. The timing and order of proteolysis of the phomA precursor and PTMs are still unknown. Two tyrosinase-like enzymes, phomQ1 and phomQ2, catalyze the chlorination and hydroxylation of Tyr, respectively. PhomYb, is proposed to be involved in the construction of the macrocyclic structure. The other 4 ustYa family proteins may be involved in PTMs that generate the unique structure of phomopsin A. PhomYa is required for the hydroxylation of C-beta of Tyr. PhomYc, phomYd, and phomYe are responsible for the biosynthesis of 2,3-dehydroisoleucine (dIle), 2,3-dehydroaspartic acid (dAsp), and 3,4-dehydroproline (dPro), respectively. While dIle formation by phomYc is indispensable for the installation of dAsp by phomYd, the order of the other PTMs have not been elucidated yet. Most of the biosynthetic enzymes likely have broad substrate specificity, and thus, there might be a metabolic grid from a precursor to phomopsin A. The enzyme(s) responsible for the biosynthesis of 3,4-dehydrovaline (dVal) have also not been identified yet. Finally, phomM acts as an S-adenosylmethionine-dependent alpha-N-methyltransferase that catalyzes two successive N-methylation reactions, converting N-desmethyl-phomopsin A to phomopsin A and phomopsin A further to an N,N-dimethylated congener called phomopsin E. This is Phomopsin biosynthesis cluster protein C' from Diaporthe leptostromiformis (Lupinosis disease fungus).